The chain runs to 356 residues: Phospho-2-dehydro-3-deoxyheptonate aldolase, Tyr-sensitive (356 aa).

The protein belongs to the class-I DAHP synthase family.

It carries out the reaction D-erythrose 4-phosphate + phosphoenolpyruvate + H2O = 7-phospho-2-dehydro-3-deoxy-D-arabino-heptonate + phosphate. The protein operates within metabolic intermediate biosynthesis; chorismate biosynthesis; chorismate from D-erythrose 4-phosphate and phosphoenolpyruvate: step 1/7. Stereospecific condensation of phosphoenolpyruvate (PEP) and D-erythrose-4-phosphate (E4P) giving rise to 3-deoxy-D-arabino-heptulosonate-7-phosphate (DAHP). This is Phospho-2-dehydro-3-deoxyheptonate aldolase, Tyr-sensitive (aroF) from Salmonella typhi.